Here is a 737-residue protein sequence, read N- to C-terminus: Polyribonucleotide nucleotidyltransferase (737 aa).

Positions 489 and 495 each coordinate Mg(2+). A KH domain is found at 556 to 615; it reads PKIDTIKIDVDKIKIVIGKGGETIDKIIAETGVKIDIDEEGNVSIYSSDQDAINRAKEII. The S1 motif domain occupies 625-693; it reads DEVYRAKVVR…EKGRIDASMK (69 aa). Residues 691 to 737 are disordered; that stretch reads SMKALLPRPPKPEHDEKGEKSERPHRPRHQKDHKPKKEFTETPKDSE. Residues 700–714 are compositionally biased toward basic and acidic residues; it reads PKPEHDEKGEKSERP. Basic residues predominate over residues 715–724; sequence HRPRHQKDHK. Positions 725-737 are enriched in basic and acidic residues; sequence PKKEFTETPKDSE.

It belongs to the polyribonucleotide nucleotidyltransferase family. It depends on Mg(2+) as a cofactor.

The protein resides in the cytoplasm. It carries out the reaction RNA(n+1) + phosphate = RNA(n) + a ribonucleoside 5'-diphosphate. Functionally, involved in mRNA degradation. Catalyzes the phosphorolysis of single-stranded polyribonucleotides processively in the 3'- to 5'-direction. This Streptococcus pneumoniae (strain JJA) protein is Polyribonucleotide nucleotidyltransferase.